Reading from the N-terminus, the 139-residue chain is Sec-independent protein translocase protein TatB (139 aa).

Residues Met-1–Gly-21 traverse the membrane as a helical segment. A disordered region spans residues Leu-69 to Pro-139. A compositionally biased stretch (pro residues) spans Met-80–Pro-95.

It belongs to the TatB family. As to quaternary structure, the Tat system comprises two distinct complexes: a TatABC complex, containing multiple copies of TatA, TatB and TatC subunits, and a separate TatA complex, containing only TatA subunits. Substrates initially bind to the TatABC complex, which probably triggers association of the separate TatA complex to form the active translocon.

The protein localises to the cell inner membrane. In terms of biological role, part of the twin-arginine translocation (Tat) system that transports large folded proteins containing a characteristic twin-arginine motif in their signal peptide across membranes. Together with TatC, TatB is part of a receptor directly interacting with Tat signal peptides. TatB may form an oligomeric binding site that transiently accommodates folded Tat precursor proteins before their translocation. The protein is Sec-independent protein translocase protein TatB of Stutzerimonas stutzeri (strain A1501) (Pseudomonas stutzeri).